The sequence spans 66 residues: Large ribosomal subunit protein bL35 (66 aa).

Belongs to the bacterial ribosomal protein bL35 family.

In Borreliella burgdorferi (strain ATCC 35210 / DSM 4680 / CIP 102532 / B31) (Borrelia burgdorferi), this protein is Large ribosomal subunit protein bL35.